Consider the following 415-residue polypeptide: Plasminogen activator inhibitor 2, macrophage (415 aa).

N-linked (GlcNAc...) asparagine glycosylation is found at Asn23, Asn75, Asn261, and Asn339.

Belongs to the serpin family. Ov-serpin subfamily. As to quaternary structure, interacts with PSMB1. Post-translationally, the signal sequence is not cleaved.

The protein localises to the cytoplasm. Its subcellular location is the secreted. It localises to the extracellular space. In terms of biological role, inhibits urokinase-type plasminogen activator. The monocyte derived PAI-2 is distinct from the endothelial cell-derived PAI-1. Not required for normal murine development or survival. In Mus musculus (Mouse), this protein is Plasminogen activator inhibitor 2, macrophage (Serpinb2).